A 249-amino-acid chain; its full sequence is 3-deoxy-D-manno-octulosonic acid kinase (249 aa).

Residue Asp-175 is part of the active site.

Belongs to the protein kinase superfamily. KdkA/RfaP family.

The protein localises to the cell inner membrane. It catalyses the reaction an alpha-Kdo-(2-&gt;6)-lipid IVA + ATP = a 4-O-phospho-alpha-Kdo-(2-&gt;6)-lipid IVA + ADP + H(+). It participates in bacterial outer membrane biogenesis; LPS core biosynthesis. Its function is as follows. Catalyzes the ATP-dependent phosphorylation of the 3-deoxy-D-manno-octulosonic acid (Kdo) residue in Kdo-lipid IV(A) at the 4-OH position. This is 3-deoxy-D-manno-octulosonic acid kinase from Xanthomonas euvesicatoria pv. vesicatoria (strain 85-10) (Xanthomonas campestris pv. vesicatoria).